Here is a 136-residue protein sequence, read N- to C-terminus: Classical arabinogalactan protein 26 (136 aa).

An N-terminal signal peptide occupies residues 1-21 (MSVSLFTAFTVLSLCLHTSTS). The interval 38-95 (APSSFSASTPAMSPDTSPLFPTPGSSEMSPSPSESSIMPTIPSSLSPPNPDAVTPDPL) is disordered. The span at 40 to 53 (SSFSASTPAMSPDT) shows a compositional bias: polar residues. Residues 59–81 (TPGSSEMSPSPSESSIMPTIPSS) show a composition bias toward low complexity. Serine 108 is lipidated: GPI-anchor amidated serine. Positions 109–136 (SSVCLVSSQLSSLLLVLLMLLLAFCSFF) are cleaved as a propeptide — removed in mature form.

The protein belongs to the classical AGP family. Post-translationally, O-glycosylated on the hydroxyproline residues.

Its subcellular location is the cell membrane. Functionally, proteoglycan that seems to be implicated in diverse developmental roles such as differentiation, cell-cell recognition, embryogenesis and programmed cell death. The polypeptide is Classical arabinogalactan protein 26 (AGP26) (Arabidopsis thaliana (Mouse-ear cress)).